Reading from the N-terminus, the 318-residue chain is MNRFGTRLVGATATSSPPPKARSNENLDKIDMSLDDIIKLNRKEGKKQNFPRLNRRLLQQSGAQQFRMRVRWGIQQNSGFGKTSLNRRGRVMPGKRRPNGVITGLAARKTTGIRKGISPMNRPPLSDKNIEQYFPVLKRKANLLRQNEGQRKPVAVLKRPSQLSRKNNIPANFTRSGNKLNHQKDTRQATFLFRRGLKVQAQLNTEQLLDDVVAKRTRQWRTSTTNGGILTVSIDNPGAVQCPVTQKPRLTRTAVPSFLTKREQSDVKKVPKGVPLQFDINSVGKQTGMTLNERFGILKEQRATLTYNKGGSRFVTVG.

Met1 is modified (N-acetylmethionine). A disordered region spans residues 1–25 (MNRFGTRLVGATATSSPPPKARSNE). A Phosphothreonine modification is found at Thr14. 2 positions are modified to phosphoserine: Ser16 and Ser23. Positions 26-44 (NLDKIDMSLDDIIKLNRKE) match the UAP56-binding motif motif. At Ser61 the chain carries Phosphoserine. The tract at residues 79 to 100 (GFGKTSLNRRGRVMPGKRRPNG) is disordered. Residues 85–98 (LNRRGRVMPGKRRP) are compositionally biased toward basic residues. A Phosphoserine modification is found at Ser118. Residue Lys140 forms a Glycyl lysine isopeptide (Lys-Gly) (interchain with G-Cter in SUMO1) linkage. Residue Lys261 forms a Glycyl lysine isopeptide (Lys-Gly) (interchain with G-Cter in SUMO2) linkage.

It belongs to the UIF family. Interacts with CHTOP. Interacts with DDX39B/UAP56 and NXF1; interaction with DDX39B/UAP56 and NXF1 are mutually exclusive. Interacts with SSRP1; required for its recruitment to mRNAs. Expressed in a wide variety of cancer types.

It localises to the nucleus. The protein resides in the nucleoplasm. It is found in the nucleus speckle. Functionally, required for mRNA export from the nucleus to the cytoplasm. Acts as an adapter that uses the DDX39B/UAP56-NFX1 pathway to ensure efficient mRNA export and delivering to the nuclear pore. Associates with spliced and unspliced mRNAs simultaneously with ALYREF/THOC4. This Homo sapiens (Human) protein is UAP56-interacting factor (FYTTD1).